Consider the following 207-residue polypeptide: Guanylate kinase (207 aa).

Residues 4–184 form the Guanylate kinase-like domain; it reads GTLYIVSAPS…ALTDLKTIIR (181 aa). 11-18 lines the ATP pocket; the sequence is APSGAGKS.

Belongs to the guanylate kinase family.

It localises to the cytoplasm. The catalysed reaction is GMP + ATP = GDP + ADP. In terms of biological role, essential for recycling GMP and indirectly, cGMP. This Escherichia coli O157:H7 protein is Guanylate kinase.